A 424-amino-acid chain; its full sequence is Elongation factor 1-alpha (424 aa).

In terms of domain architecture, tr-type G spans 5–223 (KPHLNLITIG…DAFKVPEKPI (219 aa)). Positions 14–21 (GHVDHGKS) are G1. A GTP-binding site is contributed by 14-21 (GHVDHGKS). Residue Ser-21 participates in Mg(2+) binding. The tract at residues 70-74 (GVTID) is G2. The segment at 91–94 (DAPG) is G3. GTP is bound by residues 91 to 95 (DAPGH) and 148 to 151 (NKMD). The tract at residues 148 to 151 (NKMD) is G4. The tract at residues 187–189 (SGY) is G5.

It belongs to the TRAFAC class translation factor GTPase superfamily. Classic translation factor GTPase family. EF-Tu/EF-1A subfamily.

It is found in the cytoplasm. The enzyme catalyses GTP + H2O = GDP + phosphate + H(+). In terms of biological role, GTP hydrolase that promotes the GTP-dependent binding of aminoacyl-tRNA to the A-site of ribosomes during protein biosynthesis. The sequence is that of Elongation factor 1-alpha from Thermoplasma acidophilum (strain ATCC 25905 / DSM 1728 / JCM 9062 / NBRC 15155 / AMRC-C165).